A 194-amino-acid chain; its full sequence is Imidazoleglycerol-phosphate dehydratase (194 aa).

It belongs to the imidazoleglycerol-phosphate dehydratase family.

It is found in the cytoplasm. It catalyses the reaction D-erythro-1-(imidazol-4-yl)glycerol 3-phosphate = 3-(imidazol-4-yl)-2-oxopropyl phosphate + H2O. It functions in the pathway amino-acid biosynthesis; L-histidine biosynthesis; L-histidine from 5-phospho-alpha-D-ribose 1-diphosphate: step 6/9. The chain is Imidazoleglycerol-phosphate dehydratase from Thermoanaerobacter sp. (strain X514).